We begin with the raw amino-acid sequence, 396 residues long: Elongation factor Tu (396 aa).

In terms of domain architecture, tr-type G spans 10-206 (KPHVNVGTIG…ALDTYIPTPE (197 aa)). Residues 19–26 (GHVDHGKT) are G1. A GTP-binding site is contributed by 19–26 (GHVDHGKT). Position 26 (Thr26) interacts with Mg(2+). Residues 60 to 64 (GITIN) form a G2 region. The G3 stretch occupies residues 81–84 (DCPG). GTP-binding positions include 81-85 (DCPGH) and 136-139 (NKCD). Positions 136-139 (NKCD) are G4. Residues 174–176 (SAK) are G5.

Belongs to the TRAFAC class translation factor GTPase superfamily. Classic translation factor GTPase family. EF-Tu/EF-1A subfamily. As to quaternary structure, monomer.

It is found in the cytoplasm. The enzyme catalyses GTP + H2O = GDP + phosphate + H(+). Functionally, GTP hydrolase that promotes the GTP-dependent binding of aminoacyl-tRNA to the A-site of ribosomes during protein biosynthesis. The polypeptide is Elongation factor Tu (Burkholderia cepacia (Pseudomonas cepacia)).